Reading from the N-terminus, the 2033-residue chain is Envoplakin (2033 aa).

Residues 1–27 are compositionally biased toward low complexity; sequence MFKGLSKGSQGKGSPKGSPAKGSPKGS. 2 disordered regions span residues 1-37 and 65-85; these read MFKGLSKGSQGKGSPKGSPAKGSPKGSPSRHSRAATQ and QQDRLNSEQSQALQHQQETGR. Residues 1-841 form a globular 1 region; that stretch reads MFKGLSKGSQ…LEPTLAVSAP (841 aa). Positions 12–28 are 4 X 4 AA tandem repeats of K-G-S-P; that stretch reads KGSPKGSPAKGSPKGSP. Positions 71–84 are enriched in polar residues; it reads SEQSQALQHQQETG. The stretch at 229–330 is one Spectrin repeat; it reads YTHLQGCTRQ…LCICQETQLQ (102 aa). Basic and acidic residues predominate over residues 388–401; that stretch reads TERATGDLQRRSRD. 2 disordered regions span residues 388–418 and 891–916; these read TERATGDLQRRSRDVAPLPQRRNPPQQPLHV and SEDIRRTHDAKQGSESPAQAGRESEA. One can recognise an SH3 domain in the interval 413 to 470; that stretch reads QQPLHVDSICDWDSGEVQLLQGERYKLVDNTDPHAWVVQGPGGETKRAPAACFCIPAP. The interval 842–1673 is central fibrous rod domain; the sequence is KRPRVAPLQE…AKVSREELSQ (832 aa). Residues 845–1135 adopt a coiled-coil conformation; that stretch reads RVAPLQESIQ…AISSVEPKVI (291 aa). The segment covering 891 to 902 has biased composition (basic and acidic residues); sequence SEDIRRTHDAKQ. Residues 1185–1226 form a Plectin 1 repeat; it reads KQRPKVQLQERVHEIFQVDPETEQEITRLKAKLQEMAGKRSG. Residue Ser1575 is modified to Phosphoserine. The span at 1614 to 1623 shows a compositional bias: low complexity; the sequence is QEESKLLSQK. The disordered stretch occupies residues 1614–1636; the sequence is QEESKLLSQKTESERQKAAQRGQ. The tract at residues 1674 to 2033 is globular 2; the sequence is ETQTRETNLS…ASPTVPRSLR (360 aa). Residues 1678 to 1713 form a Plectin 2 repeat; sequence RETNLSTKISILEPETGKDMSPYEAYKRGIIDRGQY. Phosphoserine is present on Ser1799. Plectin repeat units lie at residues 1818 to 1855, 1856 to 1893, 1894 to 1931, 1932 to 1969, and 1970 to 2007; these read LGLGDDSFPIAGIYDTTTDNKCSIKTAVAKNMLDPITG, QKLLEAQAATGGIVDLLSRERYSVHKAMERGLIENTST, QRLLNAQKAFTGIEDPVTKKRLSVGEAVQKGWMPRESV, LPHLQVQHLTGGLIDPKRTGRIPIQQALLSGMISEELA, and QLLQDESSYEKDLTDPISKERLSYKEAMGRCRKDPLSG. At Ser2025 the chain carries Phosphoserine.

This sequence belongs to the plakin or cytolinker family. In terms of assembly, may form a homodimer or a heterodimer with PPL. Exclusively expressed in stratified squamous epithelia.

Its subcellular location is the cell junction. The protein localises to the desmosome. It is found in the cornified envelope. It localises to the cytoplasm. The protein resides in the cytoskeleton. Component of the cornified envelope of keratinocytes. May link the cornified envelope to desmosomes and intermediate filaments. The polypeptide is Envoplakin (EVPL) (Homo sapiens (Human)).